The primary structure comprises 279 residues: Tryptophan prenyltransferase ComQ (279 aa).

Residues D67 and D71 each coordinate Mg(2+).

It belongs to the FPP/GGPP synthase family. The cofactor is Mg(2+).

It is found in the cell membrane. The enzyme catalyses L-tryptophyl-[protein] + (2E)-geranyl diphosphate = (2S,3R)-3-geranyl-2,3-dihydro-2,N(alpha)-cyclo-L-tryptophyl-[protein] + diphosphate. Part of a major quorum-sensing system that regulates the development of genetic competence. Involved in the maturation of the competence pheromone ComX. Acts by catalyzing the transfer of a geranyl group on the ComX pheromone. Cannot use farnesyl diphosphate (FPP). This chain is Tryptophan prenyltransferase ComQ, found in Bacillus spizizenii (Bacillus subtilis subsp. spizizenii).